Consider the following 135-residue polypeptide: NADH-quinone oxidoreductase subunit A (135 aa).

3 consecutive transmembrane segments (helical) span residues 9-29 (YFPI…LLTV), 67-87 (VGML…WVVV), and 97-117 (LFGF…FFYI).

It belongs to the complex I subunit 3 family. As to quaternary structure, NDH-1 is composed of 14 different subunits. Subunits NuoA, H, J, K, L, M, N constitute the membrane sector of the complex.

The protein localises to the cell inner membrane. The enzyme catalyses a quinone + NADH + 5 H(+)(in) = a quinol + NAD(+) + 4 H(+)(out). NDH-1 shuttles electrons from NADH, via FMN and iron-sulfur (Fe-S) centers, to quinones in the respiratory chain. The immediate electron acceptor for the enzyme in this species is believed to be ubiquinone. Couples the redox reaction to proton translocation (for every two electrons transferred, four hydrogen ions are translocated across the cytoplasmic membrane), and thus conserves the redox energy in a proton gradient. The polypeptide is NADH-quinone oxidoreductase subunit A (Solibacter usitatus (strain Ellin6076)).